Reading from the N-terminus, the 157-residue chain is Transcription elongation factor GreA (157 aa).

Belongs to the GreA/GreB family.

Necessary for efficient RNA polymerase transcription elongation past template-encoded arresting sites. The arresting sites in DNA have the property of trapping a certain fraction of elongating RNA polymerases that pass through, resulting in locked ternary complexes. Cleavage of the nascent transcript by cleavage factors such as GreA or GreB allows the resumption of elongation from the new 3'terminus. GreA releases sequences of 2 to 3 nucleotides. The chain is Transcription elongation factor GreA from Bartonella henselae (strain ATCC 49882 / DSM 28221 / CCUG 30454 / Houston 1) (Rochalimaea henselae).